A 302-amino-acid chain; its full sequence is Stanniocalcin-2 (302 aa).

The N-terminal stretch at 1 to 24 (MCAERLGQFMTLALVLATFDPARG) is a signal peptide. Residues 23-44 (RGTDATNPPEGPQDRSSQQKGR) are disordered. N73 is a glycosylation site (N-linked (GlcNAc...) asparagine). Residues 217–302 (KPPTAPPERQ…EQSEYSDIRR (86 aa)) form a disordered region. The segment covering 227–264 (PQVDRTKLSRAHHGEAGHHLPEPSSRETGRGAKGERGS) has biased composition (basic and acidic residues). S250 and S251 each carry phosphoserine; by FAM20C. T254 is subject to Phosphothreonine; by FAM20C.

The protein belongs to the stanniocalcin family. Homodimer; disulfide-linked. As to expression, expressed in a variety of tissues including muscle, heart, pancreas, kidney, spleen, prostate, small intestine, colon and peripheral blood leukocytes.

The protein localises to the secreted. Has an anti-hypocalcemic action on calcium and phosphate homeostasis. This chain is Stanniocalcin-2 (STC2), found in Homo sapiens (Human).